The sequence spans 154 residues: Putative pre-16S rRNA nuclease (154 aa).

The protein belongs to the YqgF nuclease family.

It is found in the cytoplasm. Functionally, could be a nuclease involved in processing of the 5'-end of pre-16S rRNA. This chain is Putative pre-16S rRNA nuclease, found in Rickettsia peacockii (strain Rustic).